Consider the following 418-residue polypeptide: Creatine kinase U-type, mitochondrial (418 aa).

Residues 1–39 constitute a mitochondrion transit peptide; the sequence is MAGPFSRLLSARPGLRLLALAGAGSLTAGILLRPESVGA. Positions 40–64 are cardiolipin-binding; the sequence is AAAERRRLYPPSAEYPDLRKHNNCM. Residues 46–132 form the Phosphagen kinase N-terminal domain; it reads RLYPPSAEYP…FDPVIQERHN (87 aa). A Phosphoserine modification is found at serine 152. The Phosphagen kinase C-terminal domain occupies 159-401; that stretch reads YVLSSRVRTG…NYLIDCERRL (243 aa). 162 to 166 contacts ATP; the sequence is SSRVR. The residue at position 197 (serine 197) is a Phosphoserine. The residue at position 214 (threonine 214) is a Phosphothreonine. Residue histidine 225 participates in ATP binding. Serine 233 is subject to Phosphoserine. Residues arginine 270, arginine 326, and 354 to 359 each bind ATP; that span reads RGTGGV. At threonine 356 the chain carries Phosphothreonine. Serine 366 carries the post-translational modification Phosphoserine. Aspartate 369 is a binding site for ATP.

This sequence belongs to the ATP:guanido phosphotransferase family. As to quaternary structure, exists as an octamer composed of four MTCK homodimers.

The protein resides in the mitochondrion inner membrane. The enzyme catalyses creatine + ATP = N-phosphocreatine + ADP + H(+). Its function is as follows. Reversibly catalyzes the transfer of phosphate between ATP and various phosphogens (e.g. creatine phosphate). Creatine kinase isoenzymes play a central role in energy transduction in tissues with large, fluctuating energy demands, such as skeletal muscle, heart, brain and spermatozoa. This chain is Creatine kinase U-type, mitochondrial (Ckmt1), found in Mus musculus (Mouse).